Consider the following 455-residue polypeptide: Argininosuccinate lyase (455 aa).

The protein belongs to the lyase 1 family. Argininosuccinate lyase subfamily.

It localises to the cytoplasm. It catalyses the reaction 2-(N(omega)-L-arginino)succinate = fumarate + L-arginine. Its pathway is amino-acid biosynthesis; L-arginine biosynthesis; L-arginine from L-ornithine and carbamoyl phosphate: step 3/3. In Shewanella denitrificans (strain OS217 / ATCC BAA-1090 / DSM 15013), this protein is Argininosuccinate lyase.